A 580-amino-acid chain; its full sequence is WD repeat-containing protein 46 (580 aa).

Residues 34 to 108 (SWKEYKKMKQ…QQEKMKVTKD (75 aa)) are disordered. Basic and acidic residues-rich tracts occupy residues 64 to 85 (TEGR…HDTG) and 98 to 108 (LQQEKMKVTKD). WD repeat units lie at residues 193–234 (AALD…YTYV), 235–272 (YDNL…NSFL), 274–312 (YVDV…HTNG), 315–354 (SLWS…GLDR), 357–396 (RIWD…NHVQ), and 399–436 (RGMH…IGHA).

As to quaternary structure, part of the small subunit (SSU) processome.

It localises to the nucleus. Its subcellular location is the nucleolus. In terms of biological role, scaffold component of the nucleolar structure. Part of the small subunit (SSU) processome, first precursor of the small eukaryotic ribosomal subunit. Required for 18S rRNA processing. Plays a role in negative regulation of detoxification genes by inhibiting protein levels of transcription factor skn-1, leading to down-regulation of skn-1 target genes. This chain is WD repeat-containing protein 46, found in Caenorhabditis elegans.